The primary structure comprises 292 residues: Porphobilinogen deaminase (292 aa).

Cys236 carries the post-translational modification S-(dipyrrolylmethanemethyl)cysteine.

It belongs to the HMBS family. As to quaternary structure, monomer. Dipyrromethane is required as a cofactor.

It catalyses the reaction 4 porphobilinogen + H2O = hydroxymethylbilane + 4 NH4(+). It functions in the pathway porphyrin-containing compound metabolism; protoporphyrin-IX biosynthesis; coproporphyrinogen-III from 5-aminolevulinate: step 2/4. Its function is as follows. Tetrapolymerization of the monopyrrole PBG into the hydroxymethylbilane pre-uroporphyrinogen in several discrete steps. This chain is Porphobilinogen deaminase, found in Wolbachia sp. subsp. Drosophila simulans (strain wRi).